Reading from the N-terminus, the 434-residue chain is Cullin-like protein 5 (434 aa).

Residues 1-34 (MKRSISPDPFSSTKSPKLVHHSPDDGGAEGNPYR) are disordered.

Belongs to the cullin family.

This Arabidopsis thaliana (Mouse-ear cress) protein is Cullin-like protein 5.